Reading from the N-terminus, the 333-residue chain is Autoinducer 2 import system permease protein LsrC (333 aa).

The next 9 helical transmembrane spans lie at leucine 14–leucine 34, leucine 39–leucine 59, isoleucine 70–valine 90, leucine 93–leucine 113, isoleucine 115–leucine 135, leucine 157–leucine 177, isoleucine 206–alanine 226, glycine 252–leucine 272, and leucine 284–aspartate 304.

Belongs to the binding-protein-dependent transport system permease family. AraH/RbsC subfamily. In terms of assembly, the complex is composed of two ATP-binding proteins (LsrA), two transmembrane proteins (LsrC and LsrD) and a solute-binding protein (LsrB).

Its subcellular location is the cell inner membrane. Part of the ABC transporter complex LsrABCD involved in autoinducer 2 (AI-2) import. Probably responsible for the translocation of the substrate across the membrane. This Photorhabdus laumondii subsp. laumondii (strain DSM 15139 / CIP 105565 / TT01) (Photorhabdus luminescens subsp. laumondii) protein is Autoinducer 2 import system permease protein LsrC (lsrC).